Here is a 160-residue protein sequence, read N- to C-terminus: uncharacterized protein (160 aa).

Residues 7 to 151 (LLINFKTLEE…NPYIWHPDMD (145 aa)) form the N-acetyltransferase domain.

This is an uncharacterized protein from Bacillus velezensis (strain DSM 23117 / BGSC 10A6 / LMG 26770 / FZB42) (Bacillus amyloliquefaciens subsp. plantarum).